Here is a 509-residue protein sequence, read N- to C-terminus: ATP synthase subunit alpha (509 aa).

169–176 (GDRQTGKT) is a binding site for ATP.

The protein belongs to the ATPase alpha/beta chains family. F-type ATPases have 2 components, CF(1) - the catalytic core - and CF(0) - the membrane proton channel. CF(1) has five subunits: alpha(3), beta(3), gamma(1), delta(1), epsilon(1). CF(0) has three main subunits: a(1), b(2) and c(9-12). The alpha and beta chains form an alternating ring which encloses part of the gamma chain. CF(1) is attached to CF(0) by a central stalk formed by the gamma and epsilon chains, while a peripheral stalk is formed by the delta and b chains.

The protein localises to the cell inner membrane. The catalysed reaction is ATP + H2O + 4 H(+)(in) = ADP + phosphate + 5 H(+)(out). Functionally, produces ATP from ADP in the presence of a proton gradient across the membrane. The alpha chain is a regulatory subunit. The protein is ATP synthase subunit alpha of Methylorubrum populi (strain ATCC BAA-705 / NCIMB 13946 / BJ001) (Methylobacterium populi).